Consider the following 482-residue polypeptide: Transcription factor Sox-9 (482 aa).

2 disordered regions span residues 1-66 (MNLL…ETED) and 160-274 (RLRI…FRDV). Residues 30-41 (SAGSPCPSGSGS) are compositionally biased toward low complexity. A compositionally biased stretch (polar residues) spans 42–52 (DTENTRPQENT). Basic and acidic residues-rich tracts occupy residues 56–66 (GDPELKKETED) and 160–174 (RLRI…DYKY). Lysine 61 is covalently cross-linked (Glycyl lysine isopeptide (Lys-Gly) (interchain with G-Cter in SUMO)). The segment at 63–103 (ETEDEKFPVCIREAVSQVLKGYDWTLVPMPVRVNGSSKSKP) is dimerization (DIM). The interval 63 to 103 (ETEDEKFPVCIREAVSQVLKGYDWTLVPMPVRVNGSSKSKP) is PQA. The HMG box DNA-binding region spans 105–173 (VKRPMNAFMV…QHKKDHPDYK (69 aa)). The segment covering 211-220 (SPHSASSMSE) has biased composition (polar residues). The segment at 224 to 308 (PGEHSGQSQG…LPPNGHPGVG (85 aa)) is transactivation domain (TAM). Short sequence motifs (9aaTAD) lie at residues 276 to 285 (IGELSSEVIS) and 291 to 299 (DVNEFDQYL). The tract at residues 295–395 (FDQYLPPNGH…HSPQQLNYSS (101 aa)) is disordered. Polar residues-rich tracts occupy residues 308-326 (GSTQ…TPSA) and 351-366 (HSLS…SQQR). The tract at residues 366-482 (RTHIKTEQLS…QPVYTQLTRP (117 aa)) is transactivation domain (TAC). A Glycyl lysine isopeptide (Lys-Gly) (interchain with G-Cter in SUMO) cross-link involves residue lysine 370. The span at 375–390 (SPSHYSDQQQQHSPQQ) shows a compositional bias: low complexity. The short motif at 433–441 (SGLYSNFSY) is the 9aaTAD 3 element. Positions 448–482 (PMYTPIADTTGVPSIPQTHSPQHWEQPVYTQLTRP) are disordered. The span at 458–482 (GVPSIPQTHSPQHWEQPVYTQLTRP) shows a compositional bias: polar residues.

In terms of assembly, interacts with the sumoylation factors ube2i/ubc9 and sumo1. Post-translationally, sumoylated. Lys-370 is the major site of sumoylation, although sumoylation at Lys-61 also occurs. Sumoylation plays a key role in regulating formation of the neural crest and otic placode. Expressed in both male and female gonads from after metamorphosis through to adult stages. In the testis, expression is restricted to the supporting Sertoli-like cells. Conversely in the ovary, expression is localized to primary oocytes (at protein level). In developing limbs, expressed before chrondrocytes form (stage 52 tadpoles) and throughout the cartilaginous anlagen until stage 56, after which expression ceases in the enlarged cells of the diaphysis. At later stages, expression continues in the chondrocytes of the epiphysis and metaphysis, and weak expression is seen in most of the diaphysis.

It is found in the nucleus. Its subcellular location is the cytoplasm. In terms of biological role, transcription factor that plays a key role in chondrocytes differentiation and skeletal development. Specifically binds the 5'-ACAAAG-3' DNA motif present in enhancers and super-enhancers and promotes expression of genes important for chondrogenesis, including COL2A1. Plays a central role in successive steps of chondrocyte differentiation. Absolutely required for precartilaginous condensation, the first step in chondrogenesis during which skeletal progenitors differentiate into prechondrocytes. Together with SOX5 and SOX6, required for overt chondrogenesis when condensed prechondrocytes differentiate into early stage chondrocytes, the second step in chondrogenesis. Later, required to direct hypertrophic maturation and block osteoblast differentiation of growth plate chondrocytes: maintains chondrocyte columnar proliferation, delays prehypertrophy and then prevents osteoblastic differentiation of chondrocytes. Also required for chondrocyte hypertrophy, both indirectly, by keeping the lineage fate of chondrocytes, and directly, by remaining present in upper hypertrophic cells. Low lipid levels are the main nutritional determinant for chondrogenic commitment of skeletal progenitor cells: when lipids levels are low, FOXO transcription factors promote expression of SOX9, which induces chondrogenic commitment and suppresses fatty acid oxidation. In addition to cartilage development, also acts as a regulator of proliferation and differentiation in epithelial stem/progenitor cells. Unlikely to play a role in sex determination but may function during testicular and ovarian differentiation. This chain is Transcription factor Sox-9, found in Xenopus tropicalis (Western clawed frog).